The chain runs to 218 residues: Acetoacetyl-CoA:acetate/butyrate CoA transferase alpha subunit (218 aa).

A CoA-binding site is contributed by 24–30 (GGFLNCG).

The protein belongs to the 3-oxoacid CoA-transferase subunit A family. As to quaternary structure, heterotetramer composed of two alpha subunits (CtfA) and two beta subunits (CtfB).

It carries out the reaction acetoacetate + butanoyl-CoA = acetoacetyl-CoA + butanoate. The catalysed reaction is acetoacetate + acetyl-CoA = acetoacetyl-CoA + acetate. The acetate and butyrate conversion reactions are inhibited in vitro by physiological levels of acetone and butanol. Functionally, catalyzes the transfer of CoA from acetoacetyl-CoA to acetate, butyrate and propionate. Also shows low activity with valerate, isobutyrate and crotonate. Plays an important role in the metabolic shift between the acid-producing and solvent-forming states of C.acetobutylicum. Acts mainly to detoxify the medium by removing the acetate and butyrate excreted earlier in the fermentation. The chain is Acetoacetyl-CoA:acetate/butyrate CoA transferase alpha subunit from Clostridium acetobutylicum (strain ATCC 824 / DSM 792 / JCM 1419 / IAM 19013 / LMG 5710 / NBRC 13948 / NRRL B-527 / VKM B-1787 / 2291 / W).